The primary structure comprises 64 residues: DNA gyrase inhibitor YacG (64 aa).

Cys7, Cys10, Cys26, and Cys30 together coordinate Zn(2+). The disordered stretch occupies residues 43–64 (KRIPGPINPDLLPYPDEGEQWQ).

Belongs to the DNA gyrase inhibitor YacG family. Interacts with GyrB. It depends on Zn(2+) as a cofactor.

Its function is as follows. Inhibits all the catalytic activities of DNA gyrase by preventing its interaction with DNA. Acts by binding directly to the C-terminal domain of GyrB, which probably disrupts DNA binding by the gyrase. This is DNA gyrase inhibitor YacG from Aeromonas salmonicida (strain A449).